The chain runs to 65 residues: Large ribosomal subunit protein bL35 (65 aa).

The protein belongs to the bacterial ribosomal protein bL35 family.

The sequence is that of Large ribosomal subunit protein bL35 from Rhodospirillum rubrum (strain ATCC 11170 / ATH 1.1.1 / DSM 467 / LMG 4362 / NCIMB 8255 / S1).